Here is a 288-residue protein sequence, read N- to C-terminus: Putative aryl-alcohol dehydrogenase AAD10 (288 aa).

This sequence belongs to the aldo/keto reductase family. Aldo/keto reductase 2 subfamily.

This is Putative aryl-alcohol dehydrogenase AAD10 (AAD10) from Saccharomyces cerevisiae (strain ATCC 204508 / S288c) (Baker's yeast).